The primary structure comprises 230 residues: 3-beta-hydroxysteroid-Delta(8),Delta(7)-isomerase (230 aa).

T2 is modified (N-acetylthreonine). 4 consecutive transmembrane segments (helical) span residues 29–49, 66–86, 121–141, and 185–205; these read WHIL…TWLL, LCWF…FSFY, MESV…IAFL, and FWFY…ILVF. Residues 61–204 form the EXPERA domain; the sequence is GRRLALCWFA…IWLVIPGILV (144 aa).

It belongs to the EBP family. In terms of tissue distribution, expressed in liver.

Its subcellular location is the endoplasmic reticulum membrane. The protein resides in the nucleus envelope. It localises to the cytoplasmic vesicle. The catalysed reaction is lathosterol = 5alpha-cholest-8-en-3beta-ol. It catalyses the reaction zymosterol = 5alpha-cholesta-7,24-dien-3beta-ol. It carries out the reaction 5,6alpha-epoxy-5alpha-cholestan-3beta-ol + H2O = 5alpha-cholestane-3beta,5,6beta-triol. The enzyme catalyses 5,6beta-epoxy-5beta-cholestan-3beta-ol + H2O = 5alpha-cholestane-3beta,5,6beta-triol. Its pathway is steroid biosynthesis; cholesterol biosynthesis. With respect to regulation, enzymatic activity is induced by 25-hydroxycholesterol, cholestyramine and lovastatin. Its function is as follows. Isomerase that catalyzes the conversion of Delta(8)-sterols to their corresponding Delta(7)-isomers. In terms of biological role, component of the microsomal antiestrogen binding site (AEBS), a multiproteic complex at the ER membrane that consists of an association between EBP and 7-dehydrocholesterol reductase/DHCR7. This complex is responsible for cholesterol-5,6-epoxide hydrolase (ChEH) activity, which consists in the hydration of cholesterol-5,6-epoxides (5,6-EC) into cholestane-3beta,5alpha,6beta-triol (CT). The precise role of each component of this complex has not been described yet. This chain is 3-beta-hydroxysteroid-Delta(8),Delta(7)-isomerase, found in Rattus norvegicus (Rat).